Consider the following 876-residue polypeptide: DNA mismatch repair protein MutS (876 aa).

626–633 (GPNMAGKS) lines the ATP pocket. The disordered stretch occupies residues 829-856 (FRAAPPPPAPAAPPKASQVEERLRAIQP). The span at 832-841 (APPPPAPAAP) shows a compositional bias: pro residues.

The protein belongs to the DNA mismatch repair MutS family.

Its function is as follows. This protein is involved in the repair of mismatches in DNA. It is possible that it carries out the mismatch recognition step. This protein has a weak ATPase activity. This Cereibacter sphaeroides (strain ATCC 17025 / ATH 2.4.3) (Rhodobacter sphaeroides) protein is DNA mismatch repair protein MutS.